The sequence spans 381 residues: GDP-mannose transporter (381 aa).

The Cytoplasmic portion of the chain corresponds to 1-40 (MADDKKTNDYTVEMDKLDQGSKNFEAPLPPVQPRSAPNAQ). Residues 41–61 (LANNPILPVLAYCGSSIMMTV) traverse the membrane as a helical segment. Residues 62–71 (MNKYVLSGTD) lie on the Lumenal side of the membrane. Residues 72–92 (FNLNFLLLCVQSIVCIVAIQT) form a helical membrane-spanning segment. The Cytoplasmic portion of the chain corresponds to 93 to 110 (CKASKLITYRDFNADEAK). A helical transmembrane segment spans residues 111 to 127 (KWFPITLLLIGMIYTGS). Residues 128-134 (KALQFLS) are Lumenal-facing. Residues 135 to 151 (IPVYTIFKNLTIILIAY) traverse the membrane as a helical segment. The Cytoplasmic portion of the chain corresponds to 152-160 (GEVLWFGGS). The helical transmembrane segment at 161 to 182 (VTGLTLFSFGLMVLSSIIAAWA) threads the bilayer. At 183-200 (DIKHAVESSGDATAKVST) the chain is on the lumenal side. A helical membrane pass occupies residues 201-221 (LNAGYIWMLINCLCTSSYVLG). Topologically, residues 222 to 233 (MRKRIKLTNFKD) are cytoplasmic. The chain crosses the membrane as a helical span at residues 234-254 (FDTMFYNNLLSIPVLLVLTFL). Topologically, residues 255–274 (MEDWSSANITRNFPPADRNG) are lumenal. N262 carries an N-linked (GlcNAc...) asparagine glycan. A helical transmembrane segment spans residues 275–295 (IMFAMILSGLSSVFISYTSAW). Residues 296-303 (CVRVTSST) are Cytoplasmic-facing. Residues 304–324 (TYSMVGALNKLPIAVSGLIFF) traverse the membrane as a helical segment. Residues 325-327 (DAP) lie on the Lumenal side of the membrane. The chain crosses the membrane as a helical span at residues 328 to 348 (VTFPSVSAIVVGFVSGIVYAV). Topologically, residues 349-381 (AKIKQNAKPKTGVLPTSNPVSASSQSMRDSLRS) are cytoplasmic. The disordered stretch occupies residues 362–381 (LPTSNPVSASSQSMRDSLRS).

This sequence belongs to the TPT transporter family. SLC35D subfamily. In terms of assembly, homooligomer.

Its subcellular location is the golgi apparatus membrane. It is found in the cytoplasmic vesicle membrane. The protein localises to the endoplasmic reticulum membrane. Its function is as follows. Involved in the import of GDP-mannose from the cytoplasm into the Golgi lumen. The polypeptide is GDP-mannose transporter (gmt1) (Aspergillus clavatus (strain ATCC 1007 / CBS 513.65 / DSM 816 / NCTC 3887 / NRRL 1 / QM 1276 / 107)).